Here is a 441-residue protein sequence, read N- to C-terminus: G-protein coupled receptor family C group 5 member C (441 aa).

A signal peptide spans 1–23 (MAIHKALVMCLGLPLFLFPGAWA). The Extracellular segment spans residues 24–50 (QGHVPPGCSQGLNPLYYNLCDRSGAWG). Residues 51 to 71 (IVLEAVAGAGIVTTFVLTIIL) traverse the membrane as a helical segment. The Cytoplasmic portion of the chain corresponds to 72 to 85 (VASLPFVQDTKKRS). The chain crosses the membrane as a helical span at residues 86–106 (LLGTQVFFLLGTLGLFCLVFA). The Extracellular portion of the chain corresponds to 107–120 (CVVKPDFSTCASRR). Residues 121–141 (FLFGVLFAICFSCLAAHVFAL) traverse the membrane as a helical segment. The Cytoplasmic portion of the chain corresponds to 142–155 (NFLARKNHGPRGWV). The helical transmembrane segment at 156–176 (IFTVALLLTLVEVIINTEWLI) threads the bilayer. Residues 177–208 (ITLVRGSGEGGPQGNSSAGWAVASPCAIANMD) lie on the Extracellular side of the membrane. The N-linked (GlcNAc...) asparagine glycan is linked to N191. Residues 209 to 229 (FVMALIYVMLLLLGAFLGAWP) form a helical membrane-spanning segment. The Cytoplasmic portion of the chain corresponds to 230–241 (ALCGRYKRWRKH). A helical membrane pass occupies residues 242 to 262 (GVFVLLTTATSVAIWVVWIVM). At 263–279 (YTYGNKQHNSPTWDDPT) the chain is on the extracellular side. Residues 280–300 (LAIALAANAWAFVLFYVIPEV) traverse the membrane as a helical segment. The Cytoplasmic portion of the chain corresponds to 301-441 (SQVTKSSPEQ…QVFRNPYVWD (141 aa)). 4 positions are modified to phosphoserine: S344, S383, S403, and S406. The segment at 412 to 441 (DMYSAQSHQAATPPKDGKNSQVFRNPYVWD) is disordered. Y414 bears the Phosphotyrosine mark. The residue at position 423 (T423) is a Phosphothreonine.

This sequence belongs to the G-protein coupled receptor 3 family. As to expression, expression is highest in the periphery, particularly in the stomach, but also in the kidney, liver, pancreas, and prostate. In brain, levels of expression are generally lower than in the periphery, with the exception of cerebellum, spinal cord, and dorsal root ganglia (DRG).

Its subcellular location is the cell membrane. The protein localises to the cytoplasmic vesicle membrane. In terms of biological role, this retinoic acid-inducible G-protein coupled receptor provide evidence for a possible interaction between retinoid and G-protein signaling pathways. The sequence is that of G-protein coupled receptor family C group 5 member C (GPRC5C) from Homo sapiens (Human).